The chain runs to 99 residues: Plastocyanin (99 aa).

Residues 1–99 (IEVLLGSDDG…AGMVGKVTVN (99 aa)) form the Plastocyanin-like domain. 4 residues coordinate Cu cation: His37, Cys84, His87, and Met92.

This sequence belongs to the plastocyanin family. Cu(2+) is required as a cofactor.

Its subcellular location is the plastid. It is found in the chloroplast thylakoid membrane. Its function is as follows. Participates in electron transfer between P700 and the cytochrome b6-f complex in photosystem I. The sequence is that of Plastocyanin (PETE) from Solanum crispum (Chilean potato-tree).